A 365-amino-acid polypeptide reads, in one-letter code: Tartrate dehydrogenase/decarboxylase (365 aa).

3 residues coordinate Mn(2+): Asp225, Asp250, and Asp254.

The protein belongs to the isocitrate and isopropylmalate dehydrogenases family. As to quaternary structure, homodimer. Mg(2+) serves as cofactor. Requires Mn(2+) as cofactor. The cofactor is K(+).

It localises to the cytoplasm. It catalyses the reaction tartrate + NAD(+) = 2-hydroxy-3-oxosuccinate + NADH + H(+). The enzyme catalyses (2R,3S)-tartrate + NAD(+) = 2-hydroxy-3-oxosuccinate + NADH + H(+). It carries out the reaction (2R,3R)-tartrate + NAD(+) = 2-hydroxy-3-oxosuccinate + NADH + H(+). The catalysed reaction is (2R,3R)-tartrate + H(+) = (R)-glycerate + CO2. It catalyses the reaction (R)-malate + NAD(+) = pyruvate + CO2 + NADH. It functions in the pathway carbohydrate acid metabolism; tartrate degradation; 2-hydroxy-3-oxosuccinate from L-tartrate: step 1/1. The protein operates within carbohydrate acid metabolism; tartrate degradation; 2-hydroxy-3-oxosuccinate from meso-tartrate: step 1/1. It participates in carbohydrate acid metabolism; tartrate degradation; D-glycerate from L-tartrate: step 1/1. In terms of biological role, has multiple catalytic activities. Apart from catalyzing the oxidation of (+)-tartrate to oxaloglycolate, also converts meso-tartrate to D-glycerate and catalyzes the oxidative decarboxylation of D-malate to pyruvate. The protein is Tartrate dehydrogenase/decarboxylase of Pseudomonas putida (Arthrobacter siderocapsulatus).